We begin with the raw amino-acid sequence, 560 residues long: MSNKVKSDIEIASKAEILPVTTIAEHLGLDADALELYGKYKAKLSYDTIHSLKDKETGKLVLVTAINPTPAGEGKSTVTVGLGDALSKKDKKTVIALREPSLGPTMGIKGGATGGGYAQVIPMEDINLHFTGDFHAITAANNALSAFIDNHMQQGNDLDIDGRRIVWKRVVDLNDRALRKVVVGLGGPIQGVPREDGFDITVASEIMAIICLASDLKDLKKRLSEIVIGYNYKKEPITVGEMGYEGALTLLLKDALKPNLVQTLEHTPAIVHGGPFANIAHGCNSVSATSTALRLGEYVVTEAGFGADLGAEKFLDIKVPALGKAPDCVVIVATIRALKMHGGALKTELSEENVDALAKGFTNLQKHTESIQTFGIPYVVAINKFITDSDAEVAKLEALCEEHGIPFSLTEVWEKGGDGGLELADKVIAAVESGEADYKRIYDDAWSIEEKLEAIVTKVYGGIGVELSSKAQKQIVEFKKYGWDRYPICMAKTQYSLSDDPTLLGRPTDFVIHIREFIPKLGAGFVVALTGDVMTMPGLPKKPAALNMDVDENGNAQGLF.

69-76 (TPAGEGKS) contributes to the ATP binding site.

This sequence belongs to the formate--tetrahydrofolate ligase family.

It carries out the reaction (6S)-5,6,7,8-tetrahydrofolate + formate + ATP = (6R)-10-formyltetrahydrofolate + ADP + phosphate. It functions in the pathway one-carbon metabolism; tetrahydrofolate interconversion. The protein is Formate--tetrahydrofolate ligase of Listeria monocytogenes serotype 4a (strain HCC23).